The sequence spans 351 residues: Heat-inducible transcription repressor HrcA (351 aa).

It belongs to the HrcA family.

In terms of biological role, negative regulator of class I heat shock genes (grpE-dnaK-dnaJ and groELS operons). Prevents heat-shock induction of these operons. This Beutenbergia cavernae (strain ATCC BAA-8 / DSM 12333 / CCUG 43141 / JCM 11478 / NBRC 16432 / NCIMB 13614 / HKI 0122) protein is Heat-inducible transcription repressor HrcA.